The primary structure comprises 642 residues: Extracellular metalloproteinase 4 (642 aa).

An N-terminal signal peptide occupies residues 1–18; that stretch reads MHGLLLAGLLALPLNVLA. Residues 19–253 constitute a propeptide that is removed on maturation; the sequence is HPTESHSSGI…VHSVVDYVSA (235 aa). A compositionally biased stretch (polar residues) spans 49–60; sequence SDSLTGQDGQSF. A disordered region spans residues 49–72; the sequence is SDSLTGQDGQSFTASSADADTSSG. The segment covering 61–71 has biased composition (low complexity); that stretch reads TASSADADTSS. Asparagine 419 carries an N-linked (GlcNAc...) asparagine glycan. Histidine 436 is a Zn(2+) binding site. The active site involves glutamate 437. A Zn(2+)-binding site is contributed by histidine 440. Asparagine 509 and asparagine 602 each carry an N-linked (GlcNAc...) asparagine glycan.

Belongs to the peptidase M36 family. Requires Zn(2+) as cofactor.

The protein localises to the secreted. Its function is as follows. Secreted metalloproteinase that allows assimilation of proteinaceous substrates and probably acts as a virulence factor. The chain is Extracellular metalloproteinase 4 (MEP4) from Arthroderma gypseum (strain ATCC MYA-4604 / CBS 118893) (Microsporum gypseum).